A 200-amino-acid chain; its full sequence is Large ribosomal subunit protein uL4 (200 aa).

The interval 43–65 (RAQKTRSEVSGGGAKPWRQKGTG) is disordered.

This sequence belongs to the universal ribosomal protein uL4 family. As to quaternary structure, part of the 50S ribosomal subunit.

Its function is as follows. One of the primary rRNA binding proteins, this protein initially binds near the 5'-end of the 23S rRNA. It is important during the early stages of 50S assembly. It makes multiple contacts with different domains of the 23S rRNA in the assembled 50S subunit and ribosome. Forms part of the polypeptide exit tunnel. The protein is Large ribosomal subunit protein uL4 of Aliivibrio salmonicida (strain LFI1238) (Vibrio salmonicida (strain LFI1238)).